The primary structure comprises 94 residues: Pyrimidine/purine nucleoside phosphorylase (94 aa).

Belongs to the nucleoside phosphorylase PpnP family.

The catalysed reaction is a purine D-ribonucleoside + phosphate = a purine nucleobase + alpha-D-ribose 1-phosphate. It carries out the reaction adenosine + phosphate = alpha-D-ribose 1-phosphate + adenine. It catalyses the reaction cytidine + phosphate = cytosine + alpha-D-ribose 1-phosphate. The enzyme catalyses guanosine + phosphate = alpha-D-ribose 1-phosphate + guanine. The catalysed reaction is inosine + phosphate = alpha-D-ribose 1-phosphate + hypoxanthine. It carries out the reaction thymidine + phosphate = 2-deoxy-alpha-D-ribose 1-phosphate + thymine. It catalyses the reaction uridine + phosphate = alpha-D-ribose 1-phosphate + uracil. The enzyme catalyses xanthosine + phosphate = alpha-D-ribose 1-phosphate + xanthine. Catalyzes the phosphorolysis of diverse nucleosides, yielding D-ribose 1-phosphate and the respective free bases. Can use uridine, adenosine, guanosine, cytidine, thymidine, inosine and xanthosine as substrates. Also catalyzes the reverse reactions. This chain is Pyrimidine/purine nucleoside phosphorylase, found in Aeromonas hydrophila subsp. hydrophila (strain ATCC 7966 / DSM 30187 / BCRC 13018 / CCUG 14551 / JCM 1027 / KCTC 2358 / NCIMB 9240 / NCTC 8049).